Consider the following 475-residue polypeptide: GlcNAc-binding protein A (475 aa).

A signal peptide spans 1–27 (MPKLTQLSLVTLALTAGSTLVSQTASA). Positions 28 to 195 (HGYVVSPESR…SFYNAIDVNF (168 aa)) constitute a Chitin-binding type-4 domain. A Chitin-binding type-3 domain is found at 426–468 (AGTKVLQPKTGKVYQCKPWPYNGYCVQWSPTATGFEPGIGNSW).

This sequence belongs to the GbpA family.

Its subcellular location is the secreted. In terms of biological role, probably interacts with GlcNAc residues. May promote attachment to both epithelial cell surfaces and chitin. The protein is GlcNAc-binding protein A of Shewanella oneidensis (strain ATCC 700550 / JCM 31522 / CIP 106686 / LMG 19005 / NCIMB 14063 / MR-1).